A 435-amino-acid chain; its full sequence is Trigger factor (435 aa).

The PPIase FKBP-type domain maps to 161-246 (GKRVSIDFVG…VNKVEARELP (86 aa)).

The protein belongs to the FKBP-type PPIase family. Tig subfamily.

The protein resides in the cytoplasm. It catalyses the reaction [protein]-peptidylproline (omega=180) = [protein]-peptidylproline (omega=0). Functionally, involved in protein export. Acts as a chaperone by maintaining the newly synthesized protein in an open conformation. Functions as a peptidyl-prolyl cis-trans isomerase. The protein is Trigger factor of Vibrio campbellii (strain ATCC BAA-1116).